A 248-amino-acid polypeptide reads, in one-letter code: 3-deoxy-manno-octulosonate cytidylyltransferase (248 aa).

Belongs to the KdsB family.

It is found in the cytoplasm. It carries out the reaction 3-deoxy-alpha-D-manno-oct-2-ulosonate + CTP = CMP-3-deoxy-beta-D-manno-octulosonate + diphosphate. It participates in nucleotide-sugar biosynthesis; CMP-3-deoxy-D-manno-octulosonate biosynthesis; CMP-3-deoxy-D-manno-octulosonate from 3-deoxy-D-manno-octulosonate and CTP: step 1/1. Its pathway is bacterial outer membrane biogenesis; lipopolysaccharide biosynthesis. In terms of biological role, activates KDO (a required 8-carbon sugar) for incorporation into bacterial lipopolysaccharide in Gram-negative bacteria. This chain is 3-deoxy-manno-octulosonate cytidylyltransferase, found in Salmonella enteritidis PT4 (strain P125109).